The primary structure comprises 867 residues: Alanine--tRNA ligase (867 aa).

4 residues coordinate Zn(2+): H554, H558, C656, and H660.

The protein belongs to the class-II aminoacyl-tRNA synthetase family. It depends on Zn(2+) as a cofactor.

The protein localises to the cytoplasm. It catalyses the reaction tRNA(Ala) + L-alanine + ATP = L-alanyl-tRNA(Ala) + AMP + diphosphate. Its function is as follows. Catalyzes the attachment of alanine to tRNA(Ala) in a two-step reaction: alanine is first activated by ATP to form Ala-AMP and then transferred to the acceptor end of tRNA(Ala). Also edits incorrectly charged Ser-tRNA(Ala) and Gly-tRNA(Ala) via its editing domain. The polypeptide is Alanine--tRNA ligase (Methylococcus capsulatus (strain ATCC 33009 / NCIMB 11132 / Bath)).